The following is a 96-amino-acid chain: Putative septation protein SpoVG (96 aa).

Belongs to the SpoVG family.

In terms of biological role, essential for sporulation. Interferes with or is a negative regulator of the pathway leading to asymmetric septation. This Priestia megaterium (Bacillus megaterium) protein is Putative septation protein SpoVG.